Here is a 199-residue protein sequence, read N- to C-terminus: Melanocortin-2 receptor accessory protein 2B (199 aa).

A glycan (N-linked (GlcNAc...) asparagine) is linked at N6. Residues 39-59 form a helical membrane-spanning segment; it reads IVIGFWVGLAVFVIFMFFVLT.

This sequence belongs to the MRAP family. As to quaternary structure, interacts with mc4r. In terms of tissue distribution, expressed in adult brain.

The protein resides in the cell membrane. It localises to the endoplasmic reticulum membrane. Its function is as follows. Activator of melanocortin receptor 4 (mc4r), a receptor involved in energy homeostasis. Plays a role after larval development in the control of energy homeostasis and body weight regulation by increasing ligand-sensitivity of mc4r and mc4r-mediated generation of cAMP once the zebrafish begins feeding, increasing the capacity for regulated feeding and growth. The protein is Melanocortin-2 receptor accessory protein 2B (mrap2b) of Danio rerio (Zebrafish).